We begin with the raw amino-acid sequence, 250 residues long: Undecaprenyl-diphosphatase (250 aa).

Transmembrane regions (helical) follow at residues 35 to 55 (DLSV…IFVG), 73 to 93 (INLT…GVLL), 100 to 120 (SLSN…ALLI), 146 to 166 (ALAI…SLLI), 171 to 191 (EIAL…AGLL), 200 to 220 (SYSI…LFIL), and 229 to 249 (LKIF…LGGI).

The protein belongs to the UppP family.

The protein localises to the cell inner membrane. The catalysed reaction is di-trans,octa-cis-undecaprenyl diphosphate + H2O = di-trans,octa-cis-undecaprenyl phosphate + phosphate + H(+). Functionally, catalyzes the dephosphorylation of undecaprenyl diphosphate (UPP). Confers resistance to bacitracin. This chain is Undecaprenyl-diphosphatase, found in Thermosipho melanesiensis (strain DSM 12029 / CIP 104789 / BI429).